A 308-amino-acid chain; its full sequence is Protein Bel-1 (308 aa).

A DNA-binding region spans residues 94-203; sequence SKSTCKRLIL…KGTRLPKRRC (110 aa). The tract at residues 200 to 242 is disordered; sequence KRRCNPSRRYETFREHPPTRKRRSKEGIPTDQQPSTSNGDPMA. Residues 207–217 show a composition bias toward basic and acidic residues; the sequence is RRYETFREHPP. Residues 217 to 226 carry the Nuclear localization signal motif; the sequence is PTRKRRSKEG. Residues 228–304 are transactivation domain; it reads PTDQQPSTSN…PLGSSEDQLL (77 aa). The span at 229 to 238 shows a compositional bias: polar residues; sequence TDQQPSTSNG.

In terms of assembly, homodimer or homomultimer. Forms complexes with the host nuclear factors NFIA, NFIB, NFIC or NFIX.

The protein resides in the host nucleus. In terms of biological role, transcriptional transactivator that activates the viral internal promoter (IP), thereby enhancing its own expression. This transactivation is repressed by nuclear factor I. Also transactivates the long terminal repeat (LTR) promoter, thereby inducing structural gene expression, initiating the late phase of infection. It is therefore a key regulator of viral gene expression. It directly binds to and activates DNA target sites of viral promoters and those of distinct cellular genes. Required for viral replication. The polypeptide is Protein Bel-1 (bel1) (Simian foamy virus type 1 (SFVmac)).